Consider the following 305-residue polypeptide: Homoserine kinase (305 aa).

ATP is bound at residue 90–100 (PLARGLGSSAS).

Belongs to the GHMP kinase family. Homoserine kinase subfamily.

It localises to the cytoplasm. It carries out the reaction L-homoserine + ATP = O-phospho-L-homoserine + ADP + H(+). The protein operates within amino-acid biosynthesis; L-threonine biosynthesis; L-threonine from L-aspartate: step 4/5. In terms of biological role, catalyzes the ATP-dependent phosphorylation of L-homoserine to L-homoserine phosphate. This is Homoserine kinase from Staphylococcus haemolyticus (strain JCSC1435).